The following is a 390-amino-acid chain: Acetylornithine aminotransferase (390 aa).

Pyridoxal 5'-phosphate contacts are provided by residues 103–104 (GT) and phenylalanine 129. Residue arginine 132 participates in N(2)-acetyl-L-ornithine binding. 214-217 (DEVQ) is a pyridoxal 5'-phosphate binding site. N6-(pyridoxal phosphate)lysine is present on lysine 243. N(2)-acetyl-L-ornithine is bound at residue serine 271. Residue threonine 272 participates in pyridoxal 5'-phosphate binding. Lysine 304 is covalently cross-linked (Isoglutamyl lysine isopeptide (Lys-Gln) (interchain with Q-Cter in protein Pup)).

It belongs to the class-III pyridoxal-phosphate-dependent aminotransferase family. ArgD subfamily. As to quaternary structure, homodimer. Pyridoxal 5'-phosphate is required as a cofactor.

The protein localises to the cytoplasm. The catalysed reaction is N(2)-acetyl-L-ornithine + 2-oxoglutarate = N-acetyl-L-glutamate 5-semialdehyde + L-glutamate. It functions in the pathway amino-acid biosynthesis; L-arginine biosynthesis; N(2)-acetyl-L-ornithine from L-glutamate: step 4/4. The sequence is that of Acetylornithine aminotransferase from Mycolicibacterium smegmatis (strain ATCC 700084 / mc(2)155) (Mycobacterium smegmatis).